Reading from the N-terminus, the 98-residue chain is Large ribosomal subunit protein uL23 (98 aa).

Belongs to the universal ribosomal protein uL23 family. In terms of assembly, part of the 50S ribosomal subunit. Contacts protein L29, and trigger factor when it is bound to the ribosome.

Its function is as follows. One of the early assembly proteins it binds 23S rRNA. One of the proteins that surrounds the polypeptide exit tunnel on the outside of the ribosome. Forms the main docking site for trigger factor binding to the ribosome. The polypeptide is Large ribosomal subunit protein uL23 (Rickettsia canadensis (strain McKiel)).